Consider the following 430-residue polypeptide: Adenylosuccinate synthetase (430 aa).

Residues 12-18 and 40-42 each bind GTP; these read GDEGKGK and GHT. Aspartate 13 acts as the Proton acceptor in catalysis. Residues aspartate 13 and glycine 40 each coordinate Mg(2+). IMP contacts are provided by residues 13–16, 38–41, threonine 130, arginine 144, glutamine 224, and threonine 239; these read DEGK and NAGH. Catalysis depends on histidine 41, which acts as the Proton donor. The interval 277 to 297 is disordered; it reads PFPTEQDNETGRKIGERGREF. A compositionally biased stretch (basic and acidic residues) spans 285 to 296; it reads ETGRKIGERGRE. Residue 299–305 participates in substrate binding; sequence TNTGRPR. Residue arginine 303 coordinates IMP. GTP contacts are provided by residues arginine 305, 331-333, and 413-415; these read KLD and STS.

Belongs to the adenylosuccinate synthetase family. Homodimer. The cofactor is Mg(2+).

The protein localises to the cytoplasm. The enzyme catalyses IMP + L-aspartate + GTP = N(6)-(1,2-dicarboxyethyl)-AMP + GDP + phosphate + 2 H(+). It participates in purine metabolism; AMP biosynthesis via de novo pathway; AMP from IMP: step 1/2. Its function is as follows. Plays an important role in the de novo pathway of purine nucleotide biosynthesis. Catalyzes the first committed step in the biosynthesis of AMP from IMP. In Bradyrhizobium sp. (strain ORS 278), this protein is Adenylosuccinate synthetase.